Here is a 379-residue protein sequence, read N- to C-terminus: RIB43A-like with coiled-coils protein 1 (379 aa).

Coiled-coil stretches lie at residues 43-111 and 285-337; these read EALN…RCEL and IRKV…EFRR.

The protein belongs to the RIB43A family. In terms of assembly, microtubule inner protein component of sperm flagellar doublet microtubules.

It localises to the cytoplasm. The protein localises to the cytoskeleton. Its subcellular location is the flagellum axoneme. This is RIB43A-like with coiled-coils protein 1 (RIBC1) from Bos taurus (Bovine).